The chain runs to 188 residues: Pyridoxal 5'-phosphate synthase subunit PdxT (188 aa).

Residue 46–48 (GES) participates in L-glutamine binding. The Nucleophile role is filled by Cys78. Residues Arg105 and 134 to 135 (IR) each bind L-glutamine. Catalysis depends on charge relay system residues His170 and Glu172.

It belongs to the glutaminase PdxT/SNO family. As to quaternary structure, in the presence of PdxS, forms a dodecamer of heterodimers. Only shows activity in the heterodimer.

It carries out the reaction aldehydo-D-ribose 5-phosphate + D-glyceraldehyde 3-phosphate + L-glutamine = pyridoxal 5'-phosphate + L-glutamate + phosphate + 3 H2O + H(+). It catalyses the reaction L-glutamine + H2O = L-glutamate + NH4(+). It participates in cofactor biosynthesis; pyridoxal 5'-phosphate biosynthesis. Its function is as follows. Catalyzes the hydrolysis of glutamine to glutamate and ammonia as part of the biosynthesis of pyridoxal 5'-phosphate. The resulting ammonia molecule is channeled to the active site of PdxS. The protein is Pyridoxal 5'-phosphate synthase subunit PdxT of Moorella thermoacetica (strain ATCC 39073 / JCM 9320).